Reading from the N-terminus, the 285-residue chain is Bifunctional protein FolD (285 aa).

Residues 165–167 (GAS) and serine 190 contribute to the NADP(+) site.

The protein belongs to the tetrahydrofolate dehydrogenase/cyclohydrolase family. In terms of assembly, homodimer.

The catalysed reaction is (6R)-5,10-methylene-5,6,7,8-tetrahydrofolate + NADP(+) = (6R)-5,10-methenyltetrahydrofolate + NADPH. The enzyme catalyses (6R)-5,10-methenyltetrahydrofolate + H2O = (6R)-10-formyltetrahydrofolate + H(+). It participates in one-carbon metabolism; tetrahydrofolate interconversion. Functionally, catalyzes the oxidation of 5,10-methylenetetrahydrofolate to 5,10-methenyltetrahydrofolate and then the hydrolysis of 5,10-methenyltetrahydrofolate to 10-formyltetrahydrofolate. The protein is Bifunctional protein FolD of Cupriavidus metallidurans (strain ATCC 43123 / DSM 2839 / NBRC 102507 / CH34) (Ralstonia metallidurans).